The primary structure comprises 319 residues: Aspartate carbamoyltransferase catalytic subunit (319 aa).

The carbamoyl phosphate site is built by Arg-57 and Thr-58. Lys-85 lines the L-aspartate pocket. Arg-107, His-140, and Gln-143 together coordinate carbamoyl phosphate. Residues Arg-173 and Arg-227 each contribute to the L-aspartate site. Carbamoyl phosphate contacts are provided by Gly-268 and Pro-269.

Belongs to the aspartate/ornithine carbamoyltransferase superfamily. ATCase family. In terms of assembly, heterododecamer (2C3:3R2) of six catalytic PyrB chains organized as two trimers (C3), and six regulatory PyrI chains organized as three dimers (R2).

The catalysed reaction is carbamoyl phosphate + L-aspartate = N-carbamoyl-L-aspartate + phosphate + H(+). It functions in the pathway pyrimidine metabolism; UMP biosynthesis via de novo pathway; (S)-dihydroorotate from bicarbonate: step 2/3. Catalyzes the condensation of carbamoyl phosphate and aspartate to form carbamoyl aspartate and inorganic phosphate, the committed step in the de novo pyrimidine nucleotide biosynthesis pathway. The chain is Aspartate carbamoyltransferase catalytic subunit from Mycobacterium tuberculosis (strain ATCC 25177 / H37Ra).